A 264-amino-acid polypeptide reads, in one-letter code: Spermidine/putrescine transport system permease protein PotC (264 aa).

Transmembrane regions (helical) follow at residues 10–30, 66–86, 109–129, 131–151, 176–196, and 232–252; these read FMTAIYAYLYIPIIILIVNSF, MAVFSATFATLIGSLTAVALY, IVMAISLLVLFMLLGIQLGFW, LLFSHITFCLPFVVVTVYSRL, IILPLAMPAVAAGWVLSFTLS, and ALATILLVLSLVMVIASQLIA. An ABC transmembrane type-1 domain is found at 60–248; sequence AQHSLTMAVF…VLSLVMVIAS (189 aa).

The protein belongs to the binding-protein-dependent transport system permease family. CysTW subfamily.

The protein localises to the cell inner membrane. Required for the activity of the bacterial periplasmic transport system of putrescine and spermidine. This is Spermidine/putrescine transport system permease protein PotC (potC) from Shigella flexneri.